Here is a 579-residue protein sequence, read N- to C-terminus: CTP synthase (579 aa).

Positions 1 to 281 are amidoligase domain; sequence MPALRKHPQT…DAYVVRRLNL (281 aa). S23 provides a ligand contact to CTP. S23 contributes to the UTP binding site. ATP-binding positions include 24–29 and D81; that span reads SLGKGL. Residues D81 and E155 each coordinate Mg(2+). Residues 162 to 164, 202 to 207, and K238 each bind CTP; these read DIE and KTKPTQ. UTP-binding positions include 202-207 and K238; that span reads KTKPTQ. A Glutamine amidotransferase type-1 domain is found at 306 to 554; it reads RIALVGKYID…IGAALDYKAA (249 aa). G369 serves as a coordination point for L-glutamine. C396 serves as the catalytic Nucleophile; for glutamine hydrolysis. L-glutamine-binding positions include 397 to 400, E419, and R480; that span reads LGLQ. Active-site residues include H527 and E529.

This sequence belongs to the CTP synthase family. In terms of assembly, homotetramer.

It carries out the reaction UTP + L-glutamine + ATP + H2O = CTP + L-glutamate + ADP + phosphate + 2 H(+). The catalysed reaction is L-glutamine + H2O = L-glutamate + NH4(+). It catalyses the reaction UTP + NH4(+) + ATP = CTP + ADP + phosphate + 2 H(+). The protein operates within pyrimidine metabolism; CTP biosynthesis via de novo pathway; CTP from UDP: step 2/2. With respect to regulation, allosterically activated by GTP, when glutamine is the substrate; GTP has no effect on the reaction when ammonia is the substrate. The allosteric effector GTP functions by stabilizing the protein conformation that binds the tetrahedral intermediate(s) formed during glutamine hydrolysis. Inhibited by the product CTP, via allosteric rather than competitive inhibition. Its function is as follows. Catalyzes the ATP-dependent amination of UTP to CTP with either L-glutamine or ammonia as the source of nitrogen. Regulates intracellular CTP levels through interactions with the four ribonucleotide triphosphates. In Mycobacterium sp. (strain KMS), this protein is CTP synthase.